The chain runs to 310 residues: Ribosomal RNA small subunit methyltransferase H (310 aa).

S-adenosyl-L-methionine contacts are provided by residues 32–34 (GGH), Asp-52, Phe-79, Asp-100, and Gln-107.

The protein belongs to the methyltransferase superfamily. RsmH family.

The protein resides in the cytoplasm. It catalyses the reaction cytidine(1402) in 16S rRNA + S-adenosyl-L-methionine = N(4)-methylcytidine(1402) in 16S rRNA + S-adenosyl-L-homocysteine + H(+). Functionally, specifically methylates the N4 position of cytidine in position 1402 (C1402) of 16S rRNA. This is Ribosomal RNA small subunit methyltransferase H from Bacillus cereus (strain AH187).